Reading from the N-terminus, the 372-residue chain is Ciliary neurotrophic factor receptor subunit alpha (372 aa).

Residues 1–22 (MAAPVPWACCAVLAAAAAVVYA) form the signal peptide. The region spanning 27–104 (PQEAPHVQYE…WHLRHQVLLH (78 aa)) is the Ig-like C2-type domain. A disulfide bond links cysteine 46 and cysteine 89. 4 N-linked (GlcNAc...) asparagine glycosylation sites follow: asparagine 60, asparagine 70, asparagine 142, and asparagine 190. 2 consecutive Fibronectin type-III domains span residues 108 to 205 (PPRE…VKPD) and 206 to 306 (PPEN…TEEP). The short motif at 290–294 (WSDWS) is the WSXWS motif element. The interval 301 to 340 (PWTEEPRHLTTEAQAAETTTSTTSSLAPPPTTKICDPGEL) is disordered. Positions 311-326 (TEAQAAETTTSTTSSL) are enriched in low complexity. Serine 342 carries the GPI-anchor amidated serine lipid modification. Residues 343–372 (GGGPSAPFLVSVPITLALAAAAATASSLLI) constitute a propeptide, removed in mature form.

The protein belongs to the type I cytokine receptor family. Type 3 subfamily. Forms a heterotrimer with LIFR and IL6ST. Interacts with heterodimeric neurotropic cytokine composed of CLCF1/CLC and CRLF1/CLF-1. Either alone or in complex with the heterodimer CLCF1-CRLF1 interacts with SORL1; this interaction may promote internalization and lysosomal degradation. Component of a receptor complex composed of IL6ST/GP130, IL27RA/WSX1 and CNTFR which interacts with the neuroprotective peptide humanin. Nervous system and skeletal muscle.

It is found in the cell membrane. Binds to CNTF. The alpha subunit provides the receptor specificity. Receptor for heterodimeric neurotropic cytokine composed of CLCF1/CLC and CRLF1/CLF-1. Acts as a receptor for the neuroprotective peptide humanin as part of a complex with IL6ST/GP130 and IL27RA/WSX1. The protein is Ciliary neurotrophic factor receptor subunit alpha (CNTFR) of Homo sapiens (Human).